The following is a 407-amino-acid chain: Formate-dependent phosphoribosylglycinamide formyltransferase (407 aa).

N(1)-(5-phospho-beta-D-ribosyl)glycinamide contacts are provided by residues 28–29 (EL) and E88. Residues R121, K162, 167–172 (SSGKGQ), 202–205 (EGFI), and E210 each bind ATP. Residues 126–320 (RLAAEELGVA…EFELHAKAIL (195 aa)) enclose the ATP-grasp domain. Mg(2+) contacts are provided by E279 and E291. N(1)-(5-phospho-beta-D-ribosyl)glycinamide contacts are provided by residues D298, K367, and 374 to 375 (RR).

It belongs to the PurK/PurT family. As to quaternary structure, homodimer.

The enzyme catalyses N(1)-(5-phospho-beta-D-ribosyl)glycinamide + formate + ATP = N(2)-formyl-N(1)-(5-phospho-beta-D-ribosyl)glycinamide + ADP + phosphate + H(+). It functions in the pathway purine metabolism; IMP biosynthesis via de novo pathway; N(2)-formyl-N(1)-(5-phospho-D-ribosyl)glycinamide from N(1)-(5-phospho-D-ribosyl)glycinamide (formate route): step 1/1. Functionally, involved in the de novo purine biosynthesis. Catalyzes the transfer of formate to 5-phospho-ribosyl-glycinamide (GAR), producing 5-phospho-ribosyl-N-formylglycinamide (FGAR). Formate is provided by PurU via hydrolysis of 10-formyl-tetrahydrofolate. In Herminiimonas arsenicoxydans, this protein is Formate-dependent phosphoribosylglycinamide formyltransferase.